The sequence spans 206 residues: Large ribosomal subunit protein uL4 (206 aa).

The segment at 43–94 (ARSGNRAQKDREQVKHTTKKPWRQKGTGRARAGMSSSPLWRGGGRIFPNSPE) is disordered. A compositionally biased stretch (basic residues) spans 58 to 70 (HTTKKPWRQKGTG).

The protein belongs to the universal ribosomal protein uL4 family. In terms of assembly, part of the 50S ribosomal subunit.

Functionally, one of the primary rRNA binding proteins, this protein initially binds near the 5'-end of the 23S rRNA. It is important during the early stages of 50S assembly. It makes multiple contacts with different domains of the 23S rRNA in the assembled 50S subunit and ribosome. Forms part of the polypeptide exit tunnel. This chain is Large ribosomal subunit protein uL4, found in Polynucleobacter asymbioticus (strain DSM 18221 / CIP 109841 / QLW-P1DMWA-1) (Polynucleobacter necessarius subsp. asymbioticus).